Reading from the N-terminus, the 383-residue chain is Serpin B5 (383 aa).

Residues Asn106, Asn133, Asn176, and Asn361 are each glycosylated (N-linked (GlcNAc...) asparagine).

It belongs to the serpin family. Ov-serpin subfamily.

The protein resides in the secreted. It is found in the extracellular space. May not exhibit serine protease inhibitory activity. The chain is Serpin B5 (serpinb5) from Xenopus laevis (African clawed frog).